Reading from the N-terminus, the 491-residue chain is MLIFEKSRKNRRTLAHAIADKMDANDIPANLLRHDAPRLPELSELEVVRHFTRLSTQNFSIDTHFYPLGSCTMKYNPRAANRLASLPGYLKRHPLSPAPQSQAFLQCLYELQTMLTEITGMEKISLTSMAGAQGEFAGVAMIKAYHESRGDYDRTEMIVPDAAHGTNPASAAMCGFTVKEISTTKDGDIDLEKLRQMVGAKTAGIMLTNPSTLGVFERQISEVAKIIHNAGGLLYYDGANLNAILGKYRPGDMGFDVMHLNLHKTFATPHGGGGPGAGPVAAGPRLSKFLPVPMVGKNKEGYDWLTEKECPKSIGRLSAFMGNSGVLLRAYIYLRLLGKEGLSRVAEFSTLNANYLMKRLEQLGFTLAFPNRRASHEFIITLKPLTRAYGVTALDIAKRLLDYGFHAPTIYFPLLVPECLLIEPTETESKQTLDHFIEAMEKILTEIKTTPDLLRNAPHQQLINRLDEVKAARELDLRWYPIAKETEIFIQ.

K264 is subject to N6-(pyridoxal phosphate)lysine.

Belongs to the GcvP family. C-terminal subunit subfamily. As to quaternary structure, the glycine cleavage system is composed of four proteins: P, T, L and H. In this organism, the P 'protein' is a heterodimer of two subunits. The cofactor is pyridoxal 5'-phosphate.

The catalysed reaction is N(6)-[(R)-lipoyl]-L-lysyl-[glycine-cleavage complex H protein] + glycine + H(+) = N(6)-[(R)-S(8)-aminomethyldihydrolipoyl]-L-lysyl-[glycine-cleavage complex H protein] + CO2. Its function is as follows. The glycine cleavage system catalyzes the degradation of glycine. The P protein binds the alpha-amino group of glycine through its pyridoxal phosphate cofactor; CO(2) is released and the remaining methylamine moiety is then transferred to the lipoamide cofactor of the H protein. The protein is Probable glycine dehydrogenase (decarboxylating) subunit 2 of Coxiella burnetii (strain CbuK_Q154) (Coxiella burnetii (strain Q154)).